The sequence spans 156 residues: Protein S100-A9 (156 aa).

EF-hand domains are found at residues 16–51 (INIFHQYSVRLGHYDTLIQKEFKQLVQKELPNFLKK) and 54–89 (KNEAAINEIMEDLDTNVDKQLSFEEFIMLVARLTVA). H20 contributes to the Zn(2+) binding site. Positions 23, 26, and 28 each coordinate Ca(2+). D30 provides a ligand contact to Zn(2+). 7 residues coordinate Ca(2+): T31, E36, D67, N69, D71, Q73, and E78. Positions 91 and 95 each coordinate Zn(2+). The disordered stretch occupies residues 94–156 (MHNTAPPGQG…HSHGGHGHSH (63 aa)). H106 is subject to Pros-methylhistidine. Residues 108 to 119 (PGYGKGGSGSCS) show a composition bias toward gly residues. The segment covering 135-156 (GHGHGHSHGGHGHSHGGHGHSH) has biased composition (basic residues).

The protein belongs to the S-100 family. In terms of assembly, homodimer. Preferentially exists as a heterodimer or heterotetramer with S100A8 known as calprotectin (S100A8/A9). S100A9 interacts with ATP2A2. S100A9 interacts with AGER, and with the heterodimeric complex formed by TLR4 and LY96 in the presence of calcium and/or zinc ions. S100A9 binds quinoline-3-carboxamides in the presence of calcium and/or zinc ions. S100A9 interacts with amyloid-beta protein 40. Calprotectin (S100A8/9) interacts with CEACAM3 and tubulin filaments in a calcium-dependent manner. Heterotetrameric calprotectin (S100A8/A9) interacts with ANXA6 and associates with tubulin filaments in activated monocytes. Calprotectin (S100A8/9) interacts with NCF2/P67PHOX, RAC1, RAC2, CYBA and CYBB. Calprotectin (S100A8/9) interacts with NOS2 to form the iNOS-S100A8/A9 transnitrosylase complex; induced by LDL(ox). Calprotectin (S100A8/9) interacts with CD69. In terms of processing, phosphorylated. Phosphorylation inhibits activation of tubulin polymerization. Methylation at His-106 by METTL9 reduces zinc-binding without affecting heterodimerization with S100A8. In terms of tissue distribution, found essentially in phagocytic cells.

Its subcellular location is the secreted. It localises to the cytoplasm. The protein resides in the cytoskeleton. The protein localises to the cell membrane. S100A9 is a calcium- and zinc-binding protein which plays a prominent role in the regulation of inflammatory processes and immune response. It can induce neutrophil chemotaxis, adhesion, can increase the bactericidal activity of neutrophils by promoting phagocytosis via activation of SYK, PI3K/AKT, and ERK1/2 and can induce degranulation of neutrophils by a MAPK-dependent mechanism. Predominantly found as calprotectin (S100A8/A9) which has a wide plethora of intra- and extracellular functions. The intracellular functions include: facilitating leukocyte arachidonic acid trafficking and metabolism, modulation of the tubulin-dependent cytoskeleton during migration of phagocytes and activation of the neutrophilic NADPH-oxidase. Also participates in regulatory T-cell differentiation together with CD69. Activates NADPH-oxidase by facilitating the enzyme complex assembly at the cell membrane, transferring arachidonic acid, an essential cofactor, to the enzyme complex and S100A8 contributes to the enzyme assembly by directly binding to NCF2/P67PHOX. The extracellular functions involve pro-inflammatory, antimicrobial, oxidant-scavenging and apoptosis-inducing activities. Its pro-inflammatory activity includes recruitment of leukocytes, promotion of cytokine and chemokine production, and regulation of leukocyte adhesion and migration. Acts as an alarmin or a danger associated molecular pattern (DAMP) molecule and stimulates innate immune cells via binding to pattern recognition receptors such as Toll-like receptor 4 (TLR4) and receptor for advanced glycation endproducts (AGER). Binding to TLR4 and AGER activates the MAP-kinase and NF-kappa-B signaling pathways resulting in the amplification of the pro-inflammatory cascade. Has antimicrobial activity towards bacteria and fungi and exerts its antimicrobial activity probably via chelation of Zn(2+) which is essential for microbial growth. Can induce cell death via autophagy and apoptosis and this occurs through the cross-talk of mitochondria and lysosomes via reactive oxygen species (ROS) and the process involves BNIP3. Can regulate neutrophil number and apoptosis by an anti-apoptotic effect; regulates cell survival via ITGAM/ITGB and TLR4 and a signaling mechanism involving MEK-ERK. Its role as an oxidant scavenger has a protective role in preventing exaggerated tissue damage by scavenging oxidants. The iNOS-S100A8/A9 transnitrosylase complex is proposed to direct selective inflammatory stimulus-dependent S-nitrosylation of multiple targets such as GAPDH, NXA5, EZR, MSN and VIM by recognizing a [IL]-x-C-x-x-[DE] motif. In Bos taurus (Bovine), this protein is Protein S100-A9 (S100A9).